A 64-amino-acid polypeptide reads, in one-letter code: Beta-insect excitatory toxin OdTx12 (64 aa).

Residues glutamine 1–aspartate 59 enclose the LCN-type CS-alpha/beta domain. Disulfide bonds link cysteine 10–cysteine 31, cysteine 16–cysteine 36, cysteine 20–cysteine 38, and cysteine 32–cysteine 58.

This sequence belongs to the long (4 C-C) scorpion toxin superfamily. Sodium channel inhibitor family. Beta subfamily. As to expression, expressed by the venom gland.

It localises to the secreted. Excitatory insect beta-toxins induce a spastic paralysis. They bind voltage-independently at site-4 of sodium channels (Nav) and shift the voltage of activation toward more negative potentials thereby affecting sodium channel activation and promoting spontaneous and repetitive firing. In vivo, this recombinant protein is lethal to Locusta migratoria larvae after injection, but has no significant effect when orally administered. Is not toxic to mice after intracerebroventricular injection. The sequence is that of Beta-insect excitatory toxin OdTx12 from Odontobuthus doriae (Yellow Iranian scorpion).